The following is a 410-amino-acid chain: Arginine deiminase (410 aa).

The Amidino-cysteine intermediate role is filled by C398.

Belongs to the arginine deiminase family.

The protein resides in the cytoplasm. The enzyme catalyses L-arginine + H2O = L-citrulline + NH4(+). It participates in amino-acid degradation; L-arginine degradation via ADI pathway; carbamoyl phosphate from L-arginine: step 1/2. This Limosilactobacillus reuteri (strain DSM 20016) (Lactobacillus reuteri) protein is Arginine deiminase.